The sequence spans 63 residues: Conotoxin TxMRCL-D012 (63 aa).

The signal sequence occupies residues 1-19 (MRCLPVFVILLLLIASTPS). Residues 20 to 47 (DTVPLKTKDDMPQASFHGNARRTLQMLS) constitute a propeptide that is removed on maturation. Residue Q50 is modified to Pyrrolidone carboxylic acid.

It belongs to the conotoxin T superfamily. In terms of processing, contains 2 disulfide bonds that can be either 'C1-C3, C2-C4' or 'C1-C4, C2-C3', since these disulfide connectivities have been observed for conotoxins with cysteine framework V (for examples, see AC P0DQQ7 and AC P81755). As to expression, expressed by the venom duct.

The protein localises to the secreted. The polypeptide is Conotoxin TxMRCL-D012 (Conus textile (Cloth-of-gold cone)).